Here is a 148-residue protein sequence, read N- to C-terminus: NADPH-dependent 7-cyano-7-deazaguanine reductase (148 aa).

Cys50 (thioimide intermediate) is an active-site residue. Catalysis depends on Asp57, which acts as the Proton donor. Substrate-binding positions include 72–74 (VES) and 91–92 (HE).

It belongs to the GTP cyclohydrolase I family. QueF type 1 subfamily.

Its subcellular location is the cytoplasm. It catalyses the reaction 7-aminomethyl-7-carbaguanine + 2 NADP(+) = 7-cyano-7-deazaguanine + 2 NADPH + 3 H(+). Its pathway is tRNA modification; tRNA-queuosine biosynthesis. Its function is as follows. Catalyzes the NADPH-dependent reduction of 7-cyano-7-deazaguanine (preQ0) to 7-aminomethyl-7-deazaguanine (preQ1). The chain is NADPH-dependent 7-cyano-7-deazaguanine reductase from Helicobacter acinonychis (strain Sheeba).